A 454-amino-acid polypeptide reads, in one-letter code: Chromosomal replication initiator protein DnaA (454 aa).

Residues 1-80 (MNLSNLWQSC…NPELRISLKE (80 aa)) are domain I, interacts with DnaA modulators. Positions 80-117 (EGVKPAPKIVESTPNTSLRSESAVDFQAESSASVKFES) are domain II. The segment at 118–335 (HLNTKHLFDN…GALNRVKAMQ (218 aa)) is domain III, AAA+ region. Residues Gly163, Gly165, Lys166, and Thr167 each contribute to the ATP site. The tract at residues 336-454 (DFKGGDIDID…WANLIRTLSA (119 aa)) is domain IV, binds dsDNA.

It belongs to the DnaA family. Oligomerizes as a right-handed, spiral filament on DNA at oriC.

Its subcellular location is the cytoplasm. Its function is as follows. Plays an essential role in the initiation and regulation of chromosomal replication. ATP-DnaA binds to the origin of replication (oriC) to initiate formation of the DNA replication initiation complex once per cell cycle. Binds the DnaA box (a 9 base pair repeat at the origin) and separates the double-stranded (ds)DNA. Forms a right-handed helical filament on oriC DNA; dsDNA binds to the exterior of the filament while single-stranded (ss)DNA is stabiized in the filament's interior. The ATP-DnaA-oriC complex binds and stabilizes one strand of the AT-rich DNA unwinding element (DUE), permitting loading of DNA polymerase. After initiation quickly degrades to an ADP-DnaA complex that is not apt for DNA replication. Binds acidic phospholipids. The sequence is that of Chromosomal replication initiator protein DnaA from Haemophilus influenzae (strain ATCC 51907 / DSM 11121 / KW20 / Rd).